We begin with the raw amino-acid sequence, 270 residues long: Oxidoreductase NAD-binding domain-containing protein 1 (270 aa).

Residues 20-123 enclose the FAD-binding FR-type domain; that stretch reads MELFSARVCD…VGGNFYFDPQ (104 aa). 137–142 contacts NAD(+); that stretch reads GVGINP.

The polypeptide is Oxidoreductase NAD-binding domain-containing protein 1 (oxnad1) (Danio rerio (Zebrafish)).